We begin with the raw amino-acid sequence, 149 residues long: Large ribosomal subunit protein bL9 (149 aa).

Belongs to the bacterial ribosomal protein bL9 family.

In terms of biological role, binds to the 23S rRNA. This is Large ribosomal subunit protein bL9 from Xylella fastidiosa (strain M23).